The chain runs to 90 residues: Genome polyprotein (90 aa).

Belongs to the potyviridae genome polyprotein family. Genome polyprotein of potyviruses undergoes post-translational proteolytic processing by the main proteinase NIa-pro resulting in the production of at least ten individual proteins. The P1 proteinase and the HC-pro cleave only their respective C-termini autocatalytically. 6K1 is essential for proper proteolytic separation of P3 from CI.

Its subcellular location is the virion. In terms of biological role, involved in aphid transmission, cell-to-cell and systemis movement, encapsidation of the viral RNA and in the regulation of viral RNA amplification. The polypeptide is Genome polyprotein (Gloriosa stripe mosaic virus (GSMV)).